Consider the following 234-residue polypeptide: 7-cyano-7-deazaguanine synthase (234 aa).

13 to 23 provides a ligand contact to ATP; that stretch reads FSGGIDSTTCL. Residues cysteine 197, cysteine 207, cysteine 210, and cysteine 213 each coordinate Zn(2+).

It belongs to the QueC family. Zn(2+) serves as cofactor.

The catalysed reaction is 7-carboxy-7-deazaguanine + NH4(+) + ATP = 7-cyano-7-deazaguanine + ADP + phosphate + H2O + H(+). The protein operates within purine metabolism; 7-cyano-7-deazaguanine biosynthesis. In terms of biological role, catalyzes the ATP-dependent conversion of 7-carboxy-7-deazaguanine (CDG) to 7-cyano-7-deazaguanine (preQ(0)). This is 7-cyano-7-deazaguanine synthase from Syntrophobacter fumaroxidans (strain DSM 10017 / MPOB).